A 461-amino-acid chain; its full sequence is Photosystem II CP43 reaction center protein (461 aa).

5 helical membrane passes run 57–81 (LFEVAHFVPEKPMYEQGIILLSHLA), 122–143 (LRGPESLEEYSTFFSQDWKDKN), 166–188 (KAMFFGGVYDTWAPGGGDVRIIS), 243–263 (KPFGWVRRAFIWNGEAYLSYS), and 279–300 (WYNNTVYPSEFFGPTAAEASQS). Glu-355 is a [CaMn4O5] cluster binding site. A helical membrane pass occupies residues 435-459 (RARAAAAGFEKGIDRATEPVLAMRD).

The protein belongs to the PsbB/PsbC family. PsbC subfamily. As to quaternary structure, PSII is composed of 1 copy each of membrane proteins PsbA, PsbB, PsbC, PsbD, PsbE, PsbF, PsbH, PsbI, PsbJ, PsbK, PsbL, PsbM, PsbT, PsbX, PsbY, PsbZ, Psb30/Ycf12, peripheral proteins PsbO, CyanoQ (PsbQ), PsbU, PsbV and a large number of cofactors. It forms dimeric complexes. The cofactor is Binds multiple chlorophylls and provides some of the ligands for the Ca-4Mn-5O cluster of the oxygen-evolving complex. It may also provide a ligand for a Cl- that is required for oxygen evolution. PSII binds additional chlorophylls, carotenoids and specific lipids..

Its subcellular location is the cellular thylakoid membrane. In terms of biological role, one of the components of the core complex of photosystem II (PSII). It binds chlorophyll and helps catalyze the primary light-induced photochemical processes of PSII. PSII is a light-driven water:plastoquinone oxidoreductase, using light energy to abstract electrons from H(2)O, generating O(2) and a proton gradient subsequently used for ATP formation. The polypeptide is Photosystem II CP43 reaction center protein (Synechococcus elongatus (strain ATCC 33912 / PCC 7942 / FACHB-805) (Anacystis nidulans R2)).